The primary structure comprises 725 residues: Catalase-peroxidase (725 aa).

Residues 99–227 constitute a cross-link (tryptophyl-tyrosyl-methioninium (Trp-Tyr) (with M-253)); it reads WHAAGTYRIA…LAAVMMGLIY (129 aa). H100 functions as the Proton acceptor in the catalytic mechanism. A cross-link (tryptophyl-tyrosyl-methioninium (Tyr-Met) (with W-99)) is located at residues 227–253; that stretch reads YVNPEGVDGNPDPLKTAHDIRITFSRM. Heme b is bound at residue H268.

This sequence belongs to the peroxidase family. Peroxidase/catalase subfamily. In terms of assembly, homodimer or homotetramer. It depends on heme b as a cofactor. Post-translationally, formation of the three residue Trp-Tyr-Met cross-link is important for the catalase, but not the peroxidase activity of the enzyme.

It catalyses the reaction H2O2 + AH2 = A + 2 H2O. The enzyme catalyses 2 H2O2 = O2 + 2 H2O. Functionally, bifunctional enzyme with both catalase and broad-spectrum peroxidase activity. The protein is Catalase-peroxidase of Picosynechococcus sp. (strain ATCC 27264 / PCC 7002 / PR-6) (Agmenellum quadruplicatum).